Reading from the N-terminus, the 461-residue chain is Homocitrate synthase (461 aa).

The region spanning 4-259 is the Pyruvate carboxyltransferase domain; that stretch reads VGILDSTLRE…IEVVKLDKLQ (256 aa). R12 contributes to the 2-oxoglutarate binding site. Residue E13 participates in Mg(2+) binding. Residues H76, R136, and T170 each coordinate 2-oxoglutarate. Positions 198 and 200 each coordinate Mg(2+). The Proton acceptor role is filled by H292.

It belongs to the alpha-IPM synthase/homocitrate synthase family. Homocitrate synthase LYS20/LYS21 subfamily. It depends on Mg(2+) as a cofactor. Mn(2+) serves as cofactor.

The catalysed reaction is acetyl-CoA + 2-oxoglutarate + H2O = (2R)-homocitrate + CoA + H(+). It participates in amino-acid biosynthesis; L-lysine biosynthesis via AAA pathway; L-alpha-aminoadipate from 2-oxoglutarate: step 1/5. Catalyzes the aldol-type condensation of 2-oxoglutarate with acetyl-CoA to yield homocitrate. Carries out the first step of the alpha-aminoadipate (AAA) lysine biosynthesis pathway. This is Homocitrate synthase from Saccharolobus solfataricus (strain ATCC 35092 / DSM 1617 / JCM 11322 / P2) (Sulfolobus solfataricus).